A 157-amino-acid chain; its full sequence is Protein-export protein SecB (157 aa).

Belongs to the SecB family. Homotetramer, a dimer of dimers. One homotetramer interacts with 1 SecA dimer.

It localises to the cytoplasm. In terms of biological role, one of the proteins required for the normal export of preproteins out of the cell cytoplasm. It is a molecular chaperone that binds to a subset of precursor proteins, maintaining them in a translocation-competent state. It also specifically binds to its receptor SecA. In Shewanella frigidimarina (strain NCIMB 400), this protein is Protein-export protein SecB.